A 220-amino-acid chain; its full sequence is IQ domain-containing protein F3 (220 aa).

A compositionally biased stretch (basic and acidic residues) spans 1–22 (MELDQDQKVETPEAAENGKDEM). Positions 1–81 (MELDQDQKVE…KQIQDEKTGI (81 aa)) are disordered. The segment covering 23 to 50 (QLEEQTQDEDTTETETETETETEAEAEG) has biased composition (acidic residues). The stretch at 69–93 (QAEKQIQDEKTGIKEADRAIQEQTQ) forms a coiled coil. One can recognise an IQ domain in the interval 146–175 (AELAGVKIQAWWRGTLVRRTLLLAILSAWT).

The sequence is that of IQ domain-containing protein F3 (Iqcf3) from Rattus norvegicus (Rat).